Consider the following 320-residue polypeptide: Acetyl-coenzyme A carboxylase carboxyl transferase subunit alpha (320 aa).

Residues 41–295 (RIEEKAGQAL…GEAIAQAFDE (255 aa)) form the CoA carboxyltransferase C-terminal domain.

Belongs to the AccA family. In terms of assembly, acetyl-CoA carboxylase is a heterohexamer composed of biotin carboxyl carrier protein (AccB), biotin carboxylase (AccC) and two subunits each of ACCase subunit alpha (AccA) and ACCase subunit beta (AccD).

The protein resides in the cytoplasm. It catalyses the reaction N(6)-carboxybiotinyl-L-lysyl-[protein] + acetyl-CoA = N(6)-biotinyl-L-lysyl-[protein] + malonyl-CoA. It functions in the pathway lipid metabolism; malonyl-CoA biosynthesis; malonyl-CoA from acetyl-CoA: step 1/1. Functionally, component of the acetyl coenzyme A carboxylase (ACC) complex. First, biotin carboxylase catalyzes the carboxylation of biotin on its carrier protein (BCCP) and then the CO(2) group is transferred by the carboxyltransferase to acetyl-CoA to form malonyl-CoA. This is Acetyl-coenzyme A carboxylase carboxyl transferase subunit alpha from Bradyrhizobium sp. (strain BTAi1 / ATCC BAA-1182).